The primary structure comprises 152 residues: Transcriptional repressor NrdR (152 aa).

The segment at 3-34 is a zinc-finger region; sequence CPFCHNEQSRVIDSRVIDSGTSIRRRRECAAC. An ATP-cone domain is found at 46–136; sequence LSVVKRNGLA…VYKSFESADD (91 aa).

This sequence belongs to the NrdR family. Zn(2+) serves as cofactor.

Its function is as follows. Negatively regulates transcription of bacterial ribonucleotide reductase nrd genes and operons by binding to NrdR-boxes. This Corynebacterium aurimucosum (strain ATCC 700975 / DSM 44827 / CIP 107346 / CN-1) (Corynebacterium nigricans) protein is Transcriptional repressor NrdR.